A 180-amino-acid polypeptide reads, in one-letter code: Large ribosomal subunit protein uL5 (180 aa).

Belongs to the universal ribosomal protein uL5 family. Part of the 50S ribosomal subunit; part of the 5S rRNA/L5/L18/L25 subcomplex. Contacts the 5S rRNA and the P site tRNA. Forms a bridge to the 30S subunit in the 70S ribosome.

Its function is as follows. This is one of the proteins that bind and probably mediate the attachment of the 5S RNA into the large ribosomal subunit, where it forms part of the central protuberance. In the 70S ribosome it contacts protein S13 of the 30S subunit (bridge B1b), connecting the 2 subunits; this bridge is implicated in subunit movement. Contacts the P site tRNA; the 5S rRNA and some of its associated proteins might help stabilize positioning of ribosome-bound tRNAs. In Ralstonia nicotianae (strain ATCC BAA-1114 / GMI1000) (Ralstonia solanacearum), this protein is Large ribosomal subunit protein uL5.